Here is a 179-residue protein sequence, read N- to C-terminus: Large ribosomal subunit protein uL6 (179 aa).

Belongs to the universal ribosomal protein uL6 family. As to quaternary structure, part of the 50S ribosomal subunit.

Its function is as follows. This protein binds to the 23S rRNA, and is important in its secondary structure. It is located near the subunit interface in the base of the L7/L12 stalk, and near the tRNA binding site of the peptidyltransferase center. This is Large ribosomal subunit protein uL6 from Syntrophus aciditrophicus (strain SB).